Here is a 118-residue protein sequence, read N- to C-terminus: Large ribosomal subunit protein uL18 (118 aa).

The protein belongs to the universal ribosomal protein uL18 family. Part of the 50S ribosomal subunit; part of the 5S rRNA/L5/L18/L25 subcomplex. Contacts the 5S and 23S rRNAs.

In terms of biological role, this is one of the proteins that bind and probably mediate the attachment of the 5S RNA into the large ribosomal subunit, where it forms part of the central protuberance. In Cupriavidus pinatubonensis (strain JMP 134 / LMG 1197) (Cupriavidus necator (strain JMP 134)), this protein is Large ribosomal subunit protein uL18.